A 462-amino-acid chain; its full sequence is Beta-glucosidase 1A (462 aa).

Substrate contacts are provided by Gln-20, His-123, and Asn-169. Glu-170 functions as the Proton donor in the catalytic mechanism. Residue Tyr-301 participates in substrate binding. The Nucleophile role is filled by Glu-365. Residues Trp-415 and 422 to 423 each bind substrate; that span reads EW.

The protein belongs to the glycosyl hydrolase 1 family.

It catalyses the reaction Hydrolysis of terminal, non-reducing beta-D-glucosyl residues with release of beta-D-glucose.. In terms of biological role, plays an important role in cellulose degradation. Shows hydrolytic activity against several glycosidic compounds. The chain is Beta-glucosidase 1A from Phanerodontia chrysosporium (White-rot fungus).